Here is a 432-residue protein sequence, read N- to C-terminus: ATP-dependent RNA helicase RhlB (432 aa).

The Q motif signature appears at 9–37 (KKFSDFALHPKVIEALEKKGFSNCTQIQA). Residues 40 to 219 (LPITVKGHDI…FEQMNNPEYV (180 aa)) enclose the Helicase ATP-binding domain. 53 to 60 (AQTGTGKT) lines the ATP pocket. Residues 165–168 (DEAD) carry the DEAD box motif. A Helicase C-terminal domain is found at 245-390 (RLLQTLIEEE…VSKYNSDALL (146 aa)). The disordered stretch occupies residues 393–432 (LPEPKRRHRPRQGQPRRNNSAPRRGNNTQRNNRNKRPSHS). Positions 404–423 (QGQPRRNNSAPRRGNNTQRN) are enriched in low complexity.

It belongs to the DEAD box helicase family. RhlB subfamily. In terms of assembly, component of the RNA degradosome, which is a multiprotein complex involved in RNA processing and mRNA degradation.

The protein resides in the cytoplasm. The enzyme catalyses ATP + H2O = ADP + phosphate + H(+). Its function is as follows. DEAD-box RNA helicase involved in RNA degradation. Has RNA-dependent ATPase activity and unwinds double-stranded RNA. This is ATP-dependent RNA helicase RhlB from Proteus mirabilis (strain HI4320).